We begin with the raw amino-acid sequence, 479 residues long: MKIYNTASKNKETFKTINNKKLIKMYVCGPTVYDHAHLGHGRTYVAFDIIRRYLEHKNYIVQLIINFTDIDDKIINRANEQGTTIKELSDKFINSFLEDMEKLNVKPALIYPRVSEHINEIIEFIKVLEKKGYAYATADGVYFDTSKYEKYGELRKINIKEETSEQKNININKKNQRDFALWKFAKPDEPKWDSPWGEGRPAWHIECSAMSLKYLGDNFDIHGGGCDLIFPHHENEKAQSECYTDKKWVNYWIHTGFVMVNNEKMSKSLGNFSTLKDLFEKYSAELIRFFLLERHYSSPLDYTEDAINHSKNNLDKLYNTIQNITVAFRNSEIKYKLNEIDKNTIETIHNCTEKFYTAMDDNFNTAQALKYVFEVSTAINKYINNYANSDELPNYSIILKSYEFFKMVGEIFGIFGSSTINTATNTNIAEENLINILMELRADLKKEKNYNLSDKIRDKLKEMDIILEDSPKGTIWKKA.

C28 contributes to the Zn(2+) binding site. The 'HIGH' region motif lies at 30–40 (PTVYDHAHLGH). Zn(2+) contacts are provided by C207, H232, and E236. The 'KMSKS' region motif lies at 264-268 (KMSKS). ATP is bound at residue K267.

The protein belongs to the class-I aminoacyl-tRNA synthetase family. Zn(2+) serves as cofactor.

It localises to the cytoplasm. It carries out the reaction tRNA(Cys) + L-cysteine + ATP = L-cysteinyl-tRNA(Cys) + AMP + diphosphate. The chain is Cysteine--tRNA ligase from Methanococcus aeolicus (strain ATCC BAA-1280 / DSM 17508 / OCM 812 / Nankai-3).